A 550-amino-acid chain; its full sequence is Hydroxylamine reductase (550 aa).

[2Fe-2S] cluster contacts are provided by cysteine 3, cysteine 6, cysteine 18, and cysteine 25. Hybrid [4Fe-2O-2S] cluster contacts are provided by histidine 249, glutamate 273, cysteine 317, cysteine 405, cysteine 433, cysteine 458, glutamate 492, and lysine 494. Cysteine 405 is subject to Cysteine persulfide.

The protein belongs to the HCP family. The cofactor is [2Fe-2S] cluster. Requires hybrid [4Fe-2O-2S] cluster as cofactor.

Its subcellular location is the cytoplasm. The enzyme catalyses A + NH4(+) + H2O = hydroxylamine + AH2 + H(+). In terms of biological role, catalyzes the reduction of hydroxylamine to form NH(3) and H(2)O. This chain is Hydroxylamine reductase, found in Shigella boydii serotype 18 (strain CDC 3083-94 / BS512).